A 333-amino-acid polypeptide reads, in one-letter code: Transaldolase (333 aa).

Catalysis depends on Lys-135, which acts as the Schiff-base intermediate with substrate.

This sequence belongs to the transaldolase family. Type 1 subfamily. Homodimer.

Its subcellular location is the cytoplasm. It carries out the reaction D-sedoheptulose 7-phosphate + D-glyceraldehyde 3-phosphate = D-erythrose 4-phosphate + beta-D-fructose 6-phosphate. Its pathway is carbohydrate degradation; pentose phosphate pathway; D-glyceraldehyde 3-phosphate and beta-D-fructose 6-phosphate from D-ribose 5-phosphate and D-xylulose 5-phosphate (non-oxidative stage): step 2/3. In terms of biological role, transaldolase is important for the balance of metabolites in the pentose-phosphate pathway. This chain is Transaldolase, found in Prochlorococcus marinus (strain MIT 9312).